A 199-amino-acid chain; its full sequence is Translation initiation factor IF-3 (199 aa).

The protein belongs to the IF-3 family. Monomer.

The protein localises to the cytoplasm. IF-3 binds to the 30S ribosomal subunit and shifts the equilibrium between 70S ribosomes and their 50S and 30S subunits in favor of the free subunits, thus enhancing the availability of 30S subunits on which protein synthesis initiation begins. In Mycoplasmopsis pulmonis (strain UAB CTIP) (Mycoplasma pulmonis), this protein is Translation initiation factor IF-3.